Reading from the N-terminus, the 424-residue chain is Histidine--tRNA ligase (424 aa).

This sequence belongs to the class-II aminoacyl-tRNA synthetase family. As to quaternary structure, homodimer.

It localises to the cytoplasm. The catalysed reaction is tRNA(His) + L-histidine + ATP = L-histidyl-tRNA(His) + AMP + diphosphate + H(+). This is Histidine--tRNA ligase from Shewanella woodyi (strain ATCC 51908 / MS32).